An 87-amino-acid chain; its full sequence is Large ribosomal subunit protein bL27 (87 aa).

The disordered stretch occupies residues 1–21; the sequence is MAHKKAGGSSRNGRDSESKRL.

The protein belongs to the bacterial ribosomal protein bL27 family.

This Burkholderia ambifaria (strain MC40-6) protein is Large ribosomal subunit protein bL27.